The sequence spans 277 residues: Protein OPG166 (277 aa).

2 N-linked (GlcNAc...) asparagine; by host glycosylation sites follow: Asn29 and Asn58. The next 5 membrane-spanning stretches (helical) occupy residues 124–144 (TMLMFIFTGITLFLLFLEITY), 156–176 (GILQVFGCVIAMIELCGAFLF), 186–206 (IIGLLMMTLPSIFLIITKVFS), 219–239 (LIIYYQLAGYILTVLGLGLSL), and 247–267 (LLLSGLGTIMVSEHFSLLFLV).

Belongs to the orthopoxvirus OPG166 protein family.

The protein resides in the host membrane. In terms of biological role, promotes, when overexpressed, the influx of extracellular Ca(2+), leading to membrane permeability and host cell necrosis. The sequence is that of Protein OPG166 (OPG166) from Vaccinia virus (strain Copenhagen) (VACV).